Consider the following 263-residue polypeptide: Leukocyte-associated immunoglobulin-like receptor 1 (263 aa).

A signal peptide spans 1-21; that stretch reads MPLHSVIVLVLVLCLGWKSNT. The Ig-like C2-type domain occupies 27–112; sequence SDFTICAEPG…VWSQRSNDLQ (86 aa). Cysteines 49 and 96 form a disulfide. The N-linked (GlcNAc...) asparagine glycan is linked to Asn-87. The helical transmembrane segment at 144–164 threads the bilayer; it reads ILTVVSVIFLLCLSLFLFCFL. 2 consecutive short sequence motifs (ITIM motif) follow at residues 225–230 and 255–260; these read VTYAQL and STYAAI. Tyr-227 and Tyr-257 each carry phosphotyrosine.

Interacts with SH2 domains of tyrosine-protein phosphatases PTPN6 and PTPN11. The interaction with PTPN6 is constitutive. Interacts with the SH2 domain of CSK. Binds with high affinity to extracellular matrix collagens, the interaction is functionally important. Post-translationally, phosphorylation at Tyr-227 and Tyr-257 activates it. May be phosphorylated by LCK. N-glycosylated. Expressed in lymphoid and non-lymphoid organs.

It is found in the membrane. Functions as an inhibitory receptor that plays a constitutive negative regulatory role on cytolytic function of natural killer (NK) cells, B-cells and T-cells. Activation by Tyr phosphorylation results in recruitment and activation of the phosphatases PTPN6 and PTPN11. It also reduces the increase of intracellular calcium evoked by B-cell receptor ligation. May also play its inhibitory role independently of SH2-containing phosphatases. Modulates cytokine production in CD4+ T-cells, down-regulating IL2 and IFNG production while inducing secretion of transforming growth factor beta. Also down-regulates IgG and IgE production in B-cells as well as IL8, IL10 and TNF secretion. Inhibits proliferation and induces apoptosis in myeloid leukemia cell lines as well as prevents nuclear translocation of NF-kappa-B p65 subunit/RELA and phosphorylation of I-kappa-B alpha/CHUK in these cells. Inhibits the differentiation of peripheral blood precursors towards dendritic cells. This is Leukocyte-associated immunoglobulin-like receptor 1 (Lair1) from Rattus norvegicus (Rat).